Here is a 148-residue protein sequence, read N- to C-terminus: Small ribosomal subunit protein bS16 (148 aa).

Residues 107–148 are disordered; that stretch reads AAARAAAGAEDRPATTPKKAKKAASADGADAPAADAPTAAGQ. The segment covering 129-148 has biased composition (low complexity); sequence AASADGADAPAADAPTAAGQ.

Belongs to the bacterial ribosomal protein bS16 family.

This is Small ribosomal subunit protein bS16 from Frankia alni (strain DSM 45986 / CECT 9034 / ACN14a).